A 311-amino-acid chain; its full sequence is tRNA-cytidine(32) 2-sulfurtransferase (311 aa).

Residues 47–52 (SGGKDS) carry the PP-loop motif motif. The [4Fe-4S] cluster site is built by cysteine 122, cysteine 125, and cysteine 213.

It belongs to the TtcA family. As to quaternary structure, homodimer. Mg(2+) is required as a cofactor. It depends on [4Fe-4S] cluster as a cofactor.

It localises to the cytoplasm. It catalyses the reaction cytidine(32) in tRNA + S-sulfanyl-L-cysteinyl-[cysteine desulfurase] + AH2 + ATP = 2-thiocytidine(32) in tRNA + L-cysteinyl-[cysteine desulfurase] + A + AMP + diphosphate + H(+). The protein operates within tRNA modification. Its function is as follows. Catalyzes the ATP-dependent 2-thiolation of cytidine in position 32 of tRNA, to form 2-thiocytidine (s(2)C32). The sulfur atoms are provided by the cysteine/cysteine desulfurase (IscS) system. This is tRNA-cytidine(32) 2-sulfurtransferase from Escherichia fergusonii (strain ATCC 35469 / DSM 13698 / CCUG 18766 / IAM 14443 / JCM 21226 / LMG 7866 / NBRC 102419 / NCTC 12128 / CDC 0568-73).